Here is a 333-residue protein sequence, read N- to C-terminus: DNA-directed RNA polymerase subunit alpha (333 aa).

Residues M1–K234 are alpha N-terminal domain (alpha-NTD). The tract at residues I248 to A333 is alpha C-terminal domain (alpha-CTD).

Belongs to the RNA polymerase alpha chain family. Homodimer. The RNAP catalytic core consists of 2 alpha, 1 beta, 1 beta' and 1 omega subunit. When a sigma factor is associated with the core the holoenzyme is formed, which can initiate transcription.

The catalysed reaction is RNA(n) + a ribonucleoside 5'-triphosphate = RNA(n+1) + diphosphate. In terms of biological role, DNA-dependent RNA polymerase catalyzes the transcription of DNA into RNA using the four ribonucleoside triphosphates as substrates. This Pseudomonas syringae pv. tomato (strain ATCC BAA-871 / DC3000) protein is DNA-directed RNA polymerase subunit alpha.